A 514-amino-acid polypeptide reads, in one-letter code: Putative binding protein HI_0213 (514 aa).

Positions 1-23 are cleaved as a signal peptide; that stretch reads MNNLFALCQRSAVIFSIIFTVVA. The N-palmitoyl cysteine moiety is linked to residue Cys24. Cys24 is lipidated: S-diacylglycerol cysteine.

The protein belongs to the bacterial solute-binding protein 5 family.

It localises to the cell membrane. In terms of biological role, part of a binding-protein-dependent transport system. This is Putative binding protein HI_0213 from Haemophilus influenzae (strain ATCC 51907 / DSM 11121 / KW20 / Rd).